A 318-amino-acid chain; its full sequence is Death effector domain-containing protein (318 aa).

The DED domain occupies 25–103; it reads SLHRMFDIVG…RHDLLPYVTL (79 aa). Residues 128 to 191 form a disordered region; sequence PRALSDPEPR…SVTPDPKEKQ (64 aa).

Interacts with CASP8, CASP10, KRT8, KRT18, CASP3 and FADD. Homodimerizes and heterodimerizes with DEDD2. In terms of processing, exists predominantly in a mono- or diubiquitinated form. As to expression, widely expressed with highest levels in testis. Within the testis, highly expressed in germ cells but not expressed in Sertoli cells.

It localises to the cytoplasm. It is found in the nucleus. Its subcellular location is the nucleolus. In terms of biological role, a scaffold protein that directs CASP3 to certain substrates and facilitates their ordered degradation during apoptosis. May also play a role in mediating CASP3 cleavage of KRT18. Regulates degradation of intermediate filaments during apoptosis. May play a role in the general transcription machinery in the nucleus and might be an important regulator of the activity of GTF3C3. Inhibits DNA transcription in vitro. The protein is Death effector domain-containing protein (Dedd) of Rattus norvegicus (Rat).